The chain runs to 157 residues: ABA-responsive protein ABR17 (157 aa).

Belongs to the BetVI family.

The protein is ABA-responsive protein ABR17 of Pisum sativum (Garden pea).